The primary structure comprises 581 residues: Transcription activator GAGA (581 aa).

Residues 34–99 (VDCTLAAGGR…VYRGEVSVDH (66 aa)) enclose the BTB domain. Residues 201 to 397 (VIQAFLPARK…SSGSGSGALS (197 aa)) form an interaction with E(bx) region. A Phosphothreonine modification is found at T237. Disordered regions lie at residues 298-343 (ITPA…EQPA) and 364-404 (LRHF…SVPQ). Residues 343-366 (ATCPICYAVIRQSRNLRRHLELRH) form a C2H2-type; degenerate zinc finger. Residues 381–401 (GKKSSSGSSGSGSGALSSSGS) show a composition bias toward low complexity.

As to quaternary structure, interacts with Bin1, lolal, corto, ttk and ph-p. Interacts with FACT subunits Ssrp and dre4/SPT16. Interacts with E(bx). Upon ecdysone stimulation, interacts with Nup98. Post-translationally, the N-terminus is blocked. In terms of tissue distribution, expressed in the central nervous system throughout development.

It localises to the nucleus. The protein resides in the chromosome. Functionally, transcriptional activator that functions by regulating chromatin structure. Overcomes the repressive effects of chromatin by promoting the open chromatin conformation in promoter gene regions, thereby allowing access to other transcription factors. Binds to DNA Polycomb response elements (PREs) at the bithorax complex and to the proximal region of the engrailed promoter, and positively regulates transcription of many genes including homeotic ones. Involved in zygotic genome activation (ZGA), a critical event in early embryonic development during which the developmental control passes from maternally provided mRNAs to the expression of the zygotic genome after fertilization. Binds to the DNA sequence (GA)n, with optimal binding to the pentamer 5'-GAGAG-3'. Binds DNA as an oligomer. May also act as a transcriptional repressor, maintaining the repressed state of genes including lolal, and down-regulating its own transcription. Required for dosage compensation in males and may be involved in oogenesis. Also has a role in nuclear division. In Drosophila melanogaster (Fruit fly), this protein is Transcription activator GAGA (Trl).